Consider the following 290-residue polypeptide: Phosphatidylserine decarboxylase proenzyme (290 aa).

Residues Asp96, His153, and Ser257 each act as charge relay system; for autoendoproteolytic cleavage activity in the active site. Ser257 (schiff-base intermediate with substrate; via pyruvic acid; for decarboxylase activity) is an active-site residue. Ser257 is subject to Pyruvic acid (Ser); by autocatalysis.

This sequence belongs to the phosphatidylserine decarboxylase family. PSD-B subfamily. Prokaryotic type I sub-subfamily. In terms of assembly, heterodimer of a large membrane-associated beta subunit and a small pyruvoyl-containing alpha subunit. Pyruvate serves as cofactor. Post-translationally, is synthesized initially as an inactive proenzyme. Formation of the active enzyme involves a self-maturation process in which the active site pyruvoyl group is generated from an internal serine residue via an autocatalytic post-translational modification. Two non-identical subunits are generated from the proenzyme in this reaction, and the pyruvate is formed at the N-terminus of the alpha chain, which is derived from the carboxyl end of the proenzyme. The autoendoproteolytic cleavage occurs by a canonical serine protease mechanism, in which the side chain hydroxyl group of the serine supplies its oxygen atom to form the C-terminus of the beta chain, while the remainder of the serine residue undergoes an oxidative deamination to produce ammonia and the pyruvoyl prosthetic group on the alpha chain. During this reaction, the Ser that is part of the protease active site of the proenzyme becomes the pyruvoyl prosthetic group, which constitutes an essential element of the active site of the mature decarboxylase.

The protein resides in the cell membrane. It catalyses the reaction a 1,2-diacyl-sn-glycero-3-phospho-L-serine + H(+) = a 1,2-diacyl-sn-glycero-3-phosphoethanolamine + CO2. It functions in the pathway phospholipid metabolism; phosphatidylethanolamine biosynthesis; phosphatidylethanolamine from CDP-diacylglycerol: step 2/2. Functionally, catalyzes the formation of phosphatidylethanolamine (PtdEtn) from phosphatidylserine (PtdSer). The polypeptide is Phosphatidylserine decarboxylase proenzyme (Haemophilus influenzae (strain ATCC 51907 / DSM 11121 / KW20 / Rd)).